Reading from the N-terminus, the 271-residue chain is Glutamate racemase (271 aa).

Residues Asp-9 to Ser-10 and Tyr-41 to Gly-42 each bind substrate. Cys-72 acts as the Proton donor/acceptor in catalysis. Asn-73 to Thr-74 lines the substrate pocket. The Proton donor/acceptor role is filled by Cys-183. Residue Thr-184 to His-185 participates in substrate binding.

Belongs to the aspartate/glutamate racemases family.

The enzyme catalyses L-glutamate = D-glutamate. It participates in cell wall biogenesis; peptidoglycan biosynthesis. Its function is as follows. Provides the (R)-glutamate required for cell wall biosynthesis. In Exiguobacterium sibiricum (strain DSM 17290 / CCUG 55495 / CIP 109462 / JCM 13490 / 255-15), this protein is Glutamate racemase.